Reading from the N-terminus, the 1119-residue chain is MADTEGTSSSIPTSTNSSRHRASRGRGGRFRQAPRQVGANTADNLDAAPLMNPRGGHRGGSGNKRGRGQKEATSASRLQMQPEANFTFNPNAATFNPAQSVLFDPSVPPPTIGASTHSNQNSRQQEPSQNRRRRGGQQNTQRRQLEIQEQRGDSHPQNQSRQNNRNQLNVDRIANQQNKSVQNPSRNPGNSRRGQGARRREQKEEPLTEEETKILADKPLREGLVYLLENNKYECAICYTRITTRQGVWSCKTCYHIFHISTGCITDWARSSRDKEGANTWRCPTCQTENETMPYNYYCFCGRMRNPNFRVGEVPHSCGETCGGARKFGCPHPCTELCHPGPCIECKLFTTKSCNCGKTKKSVRCGSDQEVMCETVCGKQLSCGQHNCERICHSGDCGECTVILEQDCFCGKTPKEVSCNPCAHEKYSCGSECDGMFSCGIHHCTKKCHDKECGECETGANRIRTCPCGRNTLQSLGVTRKKCTDMVPTCDSVCDKWLTCGTPGKNHHCREKCHEGPCPPCNLNTSVICRCGTSKGVIPCDEYLQIMKTTGEYLCTKRCRKKKSCGMHKCQEVCCIQDEHFCLQMCNKRLSCGIHTCENVCHAGQCRPCLQASFDEQFCHCGHTVRMPPIPCGARLPVCSQPCVRPHSCDHSVSHKCHGEQNCPPCTQLTEKMCYGGHRVRKNIPCHIDSVSCGVVCKKPLKCGVHVCQRTCHGEECEKEGEKCTKKCETIRELCEHPCALPCHEDSPCEPSPCKASVRISCECGRIKKDAPCCEVDKMILSKLEKEEEEKSESDGEEKVVKEGILKRSTSFSQLNCMKCDDECKKLERNRKVAEALEVDTDEYGMNKLAPTISFPCYLKEMVRTNIDFVKSVEKILIDLVIQILSGEAYHDTFRAHLPAMSIEKRRFVHEYANFFNIASESVDSPPKRSIVLTAVRGKSHQPLVLISDLVNYKGALKTPGPAVIRKDIMDQALSKKEETEGLMKPLRCTEKMVVRREARPMKEITAPIPLKQQNQFALLGSDVDSDDEESNVPTTSNLVSSPPKDWWKDEEEGWQKVQQKEYVVEVERDMTEDEIEAAKKLDEGPTWEDQCDEDAPATETSSAIESPAKEEPVAELLE.

A disordered region spans residues 1–214; it reads MADTEGTSSS…EPLTEEETKI (214 aa). Low complexity predominate over residues 7–17; that stretch reads TSSSIPTSTNS. Basic residues predominate over residues 18-29; the sequence is SRHRASRGRGGR. A compositionally biased stretch (low complexity) spans 84–98; that stretch reads ANFTFNPNAATFNPA. A compositionally biased stretch (polar residues) spans 113-128; the sequence is GASTHSNQNSRQQEPS. The span at 143-154 shows a compositional bias: basic and acidic residues; sequence RQLEIQEQRGDS. The span at 157–167 shows a compositional bias: low complexity; it reads QNQSRQNNRNQ. The span at 174-193 shows a compositional bias: polar residues; that stretch reads ANQQNKSVQNPSRNPGNSRR. Residues 198-214 show a composition bias toward basic and acidic residues; sequence RRREQKEEPLTEEETKI. The RING-type; degenerate zinc-finger motif lies at 235–287; the sequence is CAICYTRITTRQGVWSCKTCYHIFHISTGCITDWARSSRDKEGANTWRCPTCQ. NF-X1-type zinc fingers lie at residues 330–348, 383–402, 439–458, 500–523, 565–584, 592–611, 649–668, 703–726, and 735–756; these read CPHP…ECKL, CGQH…ECTV, CGIH…ECET, CGTP…PCNL, CGMH…FCLQ, CGIH…PCLQ, CDHS…PCTQ, CGVH…KCTK, and CEHP…PCKA. The 71-residue stretch at 867 to 937 folds into the R3H domain; sequence IDFVKSVEKI…KRSIVLTAVR (71 aa). 2 disordered regions span residues 1024–1047 and 1078–1119; these read VDSD…PKDW and AAKK…ELLE. The span at 1032–1041 shows a compositional bias: polar residues; it reads NVPTTSNLVS. A compositionally biased stretch (acidic residues) spans 1086 to 1097; sequence PTWEDQCDEDAP.

Belongs to the NFX1 family.

Its subcellular location is the nucleus. In terms of biological role, may play a role in transcription regulation. The protein is Transcriptional repressor NF-X1 homolog (nfx-1) of Caenorhabditis elegans.